Here is a 258-residue protein sequence, read N- to C-terminus: Type II restriction enzyme HindII (258 aa).

It catalyses the reaction Endonucleolytic cleavage of DNA to give specific double-stranded fragments with terminal 5'-phosphates.. In terms of biological role, a P subtype restriction enzyme that recognizes the double-stranded sequence 5'-GTYRAC-3' and cleaves after Y-3. This chain is Type II restriction enzyme HindII (hindIIR), found in Haemophilus influenzae (strain ATCC 51907 / DSM 11121 / KW20 / Rd).